Here is a 347-residue protein sequence, read N- to C-terminus: Coproporphyrinogen-III oxidase, aerobic 2 (347 aa).

Positions 1 to 31 are disordered; that stretch reads MGRHSDNSLQESANHTVLLTSPTNTIPKDSR. Polar residues predominate over residues 7-31; that stretch reads NSLQESANHTVLLTSPTNTIPKDSR. The segment at 75–84 is important for dimerization; the sequence is VIREGRVFEQ. Serine 119 provides a ligand contact to substrate. Catalysis depends on histidine 133, which acts as the Proton donor. Substrate contacts are provided by residues 135 to 137 and 305 to 310; these read NYR and KGRTES. An important for dimerization region spans residues 287-322; sequence YVEFNLVYDRGTVFGLQTKGRTESILMSLPPLARWE.

This sequence belongs to the aerobic coproporphyrinogen-III oxidase family. In terms of assembly, homodimer.

The protein resides in the cytoplasm. The catalysed reaction is coproporphyrinogen III + O2 + 2 H(+) = protoporphyrinogen IX + 2 CO2 + 2 H2O. It functions in the pathway porphyrin-containing compound metabolism; protoporphyrin-IX biosynthesis; protoporphyrinogen-IX from coproporphyrinogen-III (O2 route): step 1/1. In terms of biological role, key enzyme in heme biosynthesis. Catalyzes the oxidative decarboxylation of propionic acid side chains of rings A and B of coproporphyrinogen III. The protein is Coproporphyrinogen-III oxidase, aerobic 2 of Nostoc sp. (strain PCC 7120 / SAG 25.82 / UTEX 2576).